A 382-amino-acid polypeptide reads, in one-letter code: tRNA-queuosine alpha-mannosyltransferase (382 aa).

This sequence belongs to the glycosyltransferase group 1 family. Glycosyltransferase 4 subfamily.

Its subcellular location is the cytoplasm. It localises to the nucleus. It catalyses the reaction queuosine(34) in tRNA(Asp) + GDP-alpha-D-mannose = O-4''-alpha-D-mannosylqueuosine(34) in tRNA(Asp) + GDP + H(+). Its function is as follows. Glycosyltransferase that specifically catalyzes mannosylation of cytoplasmic tRNA(Asp) modified with queuosine at position 34 (queuosine(34)). Mannosylates the cyclopentene moiety of queuosine(34) in tRNA(Asp) to form mannosyl-queuosine(34). Mannosylation of queuosine(34) in tRNA(Asp) is required to slow-down elongation at cognate codons, GAC and GAU, thereby regulating protein translation. This is tRNA-queuosine alpha-mannosyltransferase (GTDC1) from Gallus gallus (Chicken).